Here is a 430-residue protein sequence, read N- to C-terminus: Probable protein phosphatase 1N (430 aa).

The segment at 16-65 is disordered; that stretch reads CKKKEREKEGREEEEEEEAGRRAPEGPRSLLTAPRRAQRPHGGAEASGGL. The span at 17-26 shows a compositional bias: basic and acidic residues; the sequence is KKKEREKEGR. The 261-residue stretch at 66-326 folds into the PPM-type phosphatase domain; it reads RFGASAAQGW…DNMTCILVCF (261 aa). Residues Asp-103, Gly-104, Asp-274, and Asp-317 each contribute to the Mn(2+) site. Residues 407-430 form a disordered region; the sequence is GEKGQDGAGKSNPTHLGSALDMEA.

The protein belongs to the PP2C family. Mg(2+) serves as cofactor. Mn(2+) is required as a cofactor.

It catalyses the reaction O-phospho-L-seryl-[protein] + H2O = L-seryl-[protein] + phosphate. It carries out the reaction O-phospho-L-threonyl-[protein] + H2O = L-threonyl-[protein] + phosphate. The chain is Probable protein phosphatase 1N (PPM1N) from Homo sapiens (Human).